The sequence spans 421 residues: Tyrosine--tRNA ligase (421 aa).

Y35 is a binding site for L-tyrosine. The 'HIGH' region signature appears at 40–49 (PTGPSLHAGH). Positions 169 and 173 each coordinate L-tyrosine. The 'KMSKS' region signature appears at 229–233 (KFGKS). K232 contributes to the ATP binding site. The S4 RNA-binding domain maps to 354–420 (RTIVDLLIAS…GKKNFAGVKI (67 aa)).

The protein belongs to the class-I aminoacyl-tRNA synthetase family. TyrS type 1 subfamily. As to quaternary structure, homodimer.

The protein resides in the cytoplasm. It carries out the reaction tRNA(Tyr) + L-tyrosine + ATP = L-tyrosyl-tRNA(Tyr) + AMP + diphosphate + H(+). Functionally, catalyzes the attachment of tyrosine to tRNA(Tyr) in a two-step reaction: tyrosine is first activated by ATP to form Tyr-AMP and then transferred to the acceptor end of tRNA(Tyr). This chain is Tyrosine--tRNA ligase, found in Corynebacterium efficiens (strain DSM 44549 / YS-314 / AJ 12310 / JCM 11189 / NBRC 100395).